The sequence spans 269 residues: Putative pyruvate, phosphate dikinase regulatory protein (269 aa).

147–154 provides a ligand contact to ADP; sequence GLSRTSKT.

It belongs to the pyruvate, phosphate/water dikinase regulatory protein family. PDRP subfamily.

The enzyme catalyses N(tele)-phospho-L-histidyl/L-threonyl-[pyruvate, phosphate dikinase] + ADP = N(tele)-phospho-L-histidyl/O-phospho-L-threonyl-[pyruvate, phosphate dikinase] + AMP + H(+). It carries out the reaction N(tele)-phospho-L-histidyl/O-phospho-L-threonyl-[pyruvate, phosphate dikinase] + phosphate + H(+) = N(tele)-phospho-L-histidyl/L-threonyl-[pyruvate, phosphate dikinase] + diphosphate. Functionally, bifunctional serine/threonine kinase and phosphorylase involved in the regulation of the pyruvate, phosphate dikinase (PPDK) by catalyzing its phosphorylation/dephosphorylation. This is Putative pyruvate, phosphate dikinase regulatory protein from Clostridium botulinum (strain ATCC 19397 / Type A).